An 827-amino-acid polypeptide reads, in one-letter code: Glycerol-3-phosphate acyltransferase (827 aa).

The HXXXXD motif signature appears at 325-330 (CHRSHM).

This sequence belongs to the GPAT/DAPAT family.

The protein localises to the cell inner membrane. The enzyme catalyses sn-glycerol 3-phosphate + an acyl-CoA = a 1-acyl-sn-glycero-3-phosphate + CoA. It functions in the pathway phospholipid metabolism; CDP-diacylglycerol biosynthesis; CDP-diacylglycerol from sn-glycerol 3-phosphate: step 1/3. The chain is Glycerol-3-phosphate acyltransferase from Shigella boydii serotype 4 (strain Sb227).